A 500-amino-acid chain; its full sequence is Glycerol kinase (500 aa).

Thr-15 contributes to the ADP binding site. 3 residues coordinate ATP: Thr-15, Thr-16, and Ser-17. Thr-15 lines the sn-glycerol 3-phosphate pocket. Arg-19 serves as a coordination point for ADP. Sn-glycerol 3-phosphate is bound by residues Arg-85, Glu-86, Tyr-137, and Asp-245. Glycerol contacts are provided by Arg-85, Glu-86, Tyr-137, Asp-245, and Gln-246. ADP contacts are provided by Thr-267 and Gly-310. The ATP site is built by Thr-267, Gly-310, Gln-314, and Gly-411. The ADP site is built by Gly-411 and Asn-415.

The protein belongs to the FGGY kinase family.

The catalysed reaction is glycerol + ATP = sn-glycerol 3-phosphate + ADP + H(+). It functions in the pathway polyol metabolism; glycerol degradation via glycerol kinase pathway; sn-glycerol 3-phosphate from glycerol: step 1/1. With respect to regulation, inhibited by fructose 1,6-bisphosphate (FBP). Functionally, key enzyme in the regulation of glycerol uptake and metabolism. Catalyzes the phosphorylation of glycerol to yield sn-glycerol 3-phosphate. The protein is Glycerol kinase of Aeromonas salmonicida (strain A449).